Consider the following 419-residue polypeptide: Serine hydroxymethyltransferase (419 aa).

Residues Leu121 and 125–127 (GHL) each bind (6S)-5,6,7,8-tetrahydrofolate. At Lys231 the chain carries N6-(pyridoxal phosphate)lysine.

It belongs to the SHMT family. In terms of assembly, homodimer. Requires pyridoxal 5'-phosphate as cofactor.

It is found in the cytoplasm. It catalyses the reaction (6R)-5,10-methylene-5,6,7,8-tetrahydrofolate + glycine + H2O = (6S)-5,6,7,8-tetrahydrofolate + L-serine. It participates in one-carbon metabolism; tetrahydrofolate interconversion. It functions in the pathway amino-acid biosynthesis; glycine biosynthesis; glycine from L-serine: step 1/1. Its function is as follows. Catalyzes the reversible interconversion of serine and glycine with tetrahydrofolate (THF) serving as the one-carbon carrier. This reaction serves as the major source of one-carbon groups required for the biosynthesis of purines, thymidylate, methionine, and other important biomolecules. Also exhibits THF-independent aldolase activity toward beta-hydroxyamino acids, producing glycine and aldehydes, via a retro-aldol mechanism. This chain is Serine hydroxymethyltransferase, found in Phytoplasma mali (strain AT).